We begin with the raw amino-acid sequence, 56 residues long: UPF0434 protein CBUD_1597.1 (56 aa).

Belongs to the UPF0434 family.

This is UPF0434 protein CBUD_1597.1 from Coxiella burnetii (strain Dugway 5J108-111).